The following is a 200-amino-acid chain: Snake venom metalloproteinase rhomb-I (200 aa).

In terms of domain architecture, Peptidase M12B spans 4–200; the sequence is KYIELVVVAD…RKPQCILNKP (197 aa). Residues glutamate 7 and aspartate 91 each contribute to the Ca(2+) site. Cystine bridges form between cysteine 115–cysteine 195, cysteine 155–cysteine 179, and cysteine 157–cysteine 162. Residue histidine 140 participates in Zn(2+) binding. Residue glutamate 141 is part of the active site. Positions 144 and 150 each coordinate Zn(2+). Positions 195 and 198 each coordinate Ca(2+).

As to quaternary structure, monomer. It depends on Zn(2+) as a cofactor. In terms of tissue distribution, expressed by the venom gland.

It localises to the secreted. Its function is as follows. Snake venom zinc metalloproteinase that induces hemorrhage. In Lachesis muta rhombeata (Bushmaster), this protein is Snake venom metalloproteinase rhomb-I.